We begin with the raw amino-acid sequence, 1966 residues long: Histone-lysine N-methyltransferase SETD1B (1966 aa).

The segment covering 1 to 12 (MENSHPPHHHHQ) has biased composition (basic residues). Residues 1 to 26 (MENSHPPHHHHQQPPPQPGPSGERRN) are disordered. The interaction with WDR82 stretch occupies residues 68–98 (VEDPRVVGIWTKNKELELSVPKFKIDEFYVG). The region spanning 93–181 (DEFYVGPVPP…NIIHVELDTK (89 aa)) is the RRM domain. Disordered regions lie at residues 235–302 (GCGS…LFSQ), 357–660 (VGGT…PKPM), 675–719 (LAPT…PPPA), 963–1462 (KVKR…SGPL), 1501–1541 (PPLL…RPPA), 1555–1606 (QPQT…KLPF), and 1636–1668 (AKSR…PQPL). 3 stretches are compositionally biased toward polar residues: residues 243–259 (VTPN…TAYS), 265–274 (TPNSYGQGTP), and 282–300 (PFSQ…SYLF). 2 stretches are compositionally biased toward pro residues: residues 432 to 441 (PAPPPLPPAE) and 449 to 458 (GTPPGPPPPD). Residues 493–521 (EKPHDSLDSRIEMLLKEQRTKLLFLREPD) show a composition bias toward basic and acidic residues. A compositionally biased stretch (low complexity) spans 531–543 (SPISSSSSQLSPL). A compositionally biased stretch (pro residues) spans 592-603 (PRPPPEPGPPDP). Residues 637 to 646 (EDMEISDDEM) are compositionally biased toward acidic residues. The span at 679–719 (LPLPPPPGFPPLPPPPPPPPPQPGFPMPPPLPPPPPPPPPA) shows a compositional bias: pro residues. Residues Ser986 and Ser994 each carry the phosphoserine modification. Over residues 995 to 1015 (ERERDRDMADTPCELAKRDPK) the composition is skewed to basic and acidic residues. A Phosphoserine modification is found at Ser1031. Residues 1041–1064 (LSASSSSSASSSSGSSTTSPSSSA) show a composition bias toward low complexity. Acidic residues-rich tracts occupy residues 1067 to 1087 (KEEE…EEEE) and 1104 to 1142 (KDDD…EEET). A compositionally biased stretch (low complexity) spans 1148–1174 (SKAEATSSSESSESSEFESSSESSPSS). Residues 1173-1204 (SSSEDEEEVVAREEEEEEEEEEMVAEESMASA) adopt a coiled-coil conformation. 2 stretches are compositionally biased toward acidic residues: residues 1175 to 1197 (SEDE…EMVA) and 1229 to 1238 (GMEEEVDIET). 3 positions are modified to phosphoserine: Ser1265, Ser1283, and Ser1335. Residues 1312–1340 (EPPMMLPLPLQPPLPPPRPPRPPSPPPEP) show a composition bias toward pro residues. The segment covering 1383–1425 (PGGEPPLSGGSSGLSLSSPQVPGSPFSYPAPSPSLSSGGLPRT) has biased composition (low complexity). The segment covering 1501–1514 (PPLLPAPLASCPPP) has biased composition (pro residues). The segment covering 1515–1524 (MKRKPGRPRR) has biased composition (basic residues). The segment covering 1580–1600 (PAPPPPLPPQPPPPPPPPPVE) has biased composition (pro residues). Phosphoserine occurs at positions 1659 and 1663. Positions 1745–1750 (GCARSE) match the WDR5 interaction motif (WIN) motif. Residues 1767–1800 (SRASTDEPPADTQGMSIPAQPHASTRAGSERRSE) form a disordered region. The short motif at 1798-1803 (RSEQRR) is the RxxxRR motif element. In terms of domain architecture, SET spans 1827 to 1944 (KKLKFCKSHI…VNEEITYDYK (118 aa)). Residue Tyr1943 coordinates S-adenosyl-L-methionine. The Post-SET domain maps to 1950–1966 (VKIPCLCGSENCRGTLN).

The protein belongs to the class V-like SAM-binding methyltransferase superfamily. As to quaternary structure, component of the SET1B/COMPASS complex composed of the catalytic subunit SETD1B, WDR5, WDR82, RBBP5, ASH2L/ASH2, CXXC1/CFP1, HCFC1, DPY30 homotrimer and BOD1. Forms a core complex with the evolutionary conserved subcomplex WRAD composed of WDR5, RBBP5, ASH2L/ASH2 and DPY30 subunits; WRAD differentially stimulates the methyltransferase activity. Interacts with HCFC1 and ASH2L/ASH2. Interacts (via N-terminal region) with WDR82. Interacts (via the RRM domain) with hyperphosphorylated C-terminal domain (CTD) of RNA polymerase II large subunit (POLR2A) only in the presence of WDR82. Binds specifically to CTD heptad repeats phosphorylated on 'Ser-5' of each heptad. Interacts with RBM15. Interacts (via WIN motif) with WDR5.

It is found in the nucleus. Its subcellular location is the nucleus speckle. It localises to the chromosome. The protein resides in the cytoplasm. The catalysed reaction is L-lysyl(4)-[histone H3] + S-adenosyl-L-methionine = N(6)-methyl-L-lysyl(4)-[histone H3] + S-adenosyl-L-homocysteine + H(+). The enzyme catalyses N(6)-methyl-L-lysyl(4)-[histone H3] + S-adenosyl-L-methionine = N(6),N(6)-dimethyl-L-lysyl(4)-[histone H3] + S-adenosyl-L-homocysteine + H(+). It catalyses the reaction N(6),N(6)-dimethyl-L-lysyl(4)-[histone H3] + S-adenosyl-L-methionine = N(6),N(6),N(6)-trimethyl-L-lysyl(4)-[histone H3] + S-adenosyl-L-homocysteine + H(+). In terms of biological role, histone methyltransferase that catalyzes methyl group transfer from S-adenosyl-L-methionine to the epsilon-amino group of 'Lys-4' of histone H3 (H3K4) via a non-processive mechanism. Part of chromatin remodeling machinery, forms H3K4me1, H3K4me2 and H3K4me3 methylation marks at active chromatin sites where transcription and DNA repair take place. Plays an essential role in regulating the transcriptional programming of multipotent hematopoietic progenitor cells and lymphoid lineage specification during hematopoiesis. This chain is Histone-lysine N-methyltransferase SETD1B (SETD1B), found in Homo sapiens (Human).